The following is a 372-amino-acid chain: UDP-N-acetylglucosamine--N-acetylmuramyl-(pentapeptide) pyrophosphoryl-undecaprenol N-acetylglucosamine transferase (372 aa).

UDP-N-acetyl-alpha-D-glucosamine-binding positions include 14–16 (TGG), N128, R169, S201, I257, and Q302.

It belongs to the glycosyltransferase 28 family. MurG subfamily.

The protein localises to the cell inner membrane. The catalysed reaction is di-trans,octa-cis-undecaprenyl diphospho-N-acetyl-alpha-D-muramoyl-L-alanyl-D-glutamyl-meso-2,6-diaminopimeloyl-D-alanyl-D-alanine + UDP-N-acetyl-alpha-D-glucosamine = di-trans,octa-cis-undecaprenyl diphospho-[N-acetyl-alpha-D-glucosaminyl-(1-&gt;4)]-N-acetyl-alpha-D-muramoyl-L-alanyl-D-glutamyl-meso-2,6-diaminopimeloyl-D-alanyl-D-alanine + UDP + H(+). Its pathway is cell wall biogenesis; peptidoglycan biosynthesis. In terms of biological role, cell wall formation. Catalyzes the transfer of a GlcNAc subunit on undecaprenyl-pyrophosphoryl-MurNAc-pentapeptide (lipid intermediate I) to form undecaprenyl-pyrophosphoryl-MurNAc-(pentapeptide)GlcNAc (lipid intermediate II). The chain is UDP-N-acetylglucosamine--N-acetylmuramyl-(pentapeptide) pyrophosphoryl-undecaprenol N-acetylglucosamine transferase from Bacteroides thetaiotaomicron (strain ATCC 29148 / DSM 2079 / JCM 5827 / CCUG 10774 / NCTC 10582 / VPI-5482 / E50).